The following is a 313-amino-acid chain: Ribosomal RNA small subunit methyltransferase H (313 aa).

Residues 34 to 36, Asp53, Phe80, Asp101, and Gln108 each bind S-adenosyl-L-methionine; that span reads GGH.

This sequence belongs to the methyltransferase superfamily. RsmH family.

The protein localises to the cytoplasm. It carries out the reaction cytidine(1402) in 16S rRNA + S-adenosyl-L-methionine = N(4)-methylcytidine(1402) in 16S rRNA + S-adenosyl-L-homocysteine + H(+). Functionally, specifically methylates the N4 position of cytidine in position 1402 (C1402) of 16S rRNA. The protein is Ribosomal RNA small subunit methyltransferase H of Lacticaseibacillus paracasei (strain ATCC 334 / BCRC 17002 / CCUG 31169 / CIP 107868 / KCTC 3260 / NRRL B-441) (Lactobacillus paracasei).